A 565-amino-acid polypeptide reads, in one-letter code: uncharacterized protein (565 aa).

5 helical membrane passes run 4-26, 33-55, 68-90, 97-119, and 162-184; these read FVQFLGSNPYILLFLTIGLAVWV, GYGLGAVAAAIVVGCLVATVGAA, SLLYYLFMYGVGLRVGPSFVNAL, YAILAIIAPILGLAIVVLGTQFF, and ISAMIALSYGITYIWGTVGIILL. 2 RCK C-terminal domains span residues 210 to 295 and 296 to 379; these read PNVD…LGPE and VPDA…IFGV. 5 helical membrane passes run 389–411, 415–432, 453–472, 482–504, and 539–561; these read LLTLSFGMILGFLIGLIEVPAFG, GLGNAGGLLLSGIIVSSI, LGLIGFVAIVGINAGADLLT, IFIVGFLASTIPPIIVWAIGFHI, and WLGFPVGYAVSGVLLTVFGYFAM.

It belongs to the AAE transporter (TC 2.A.81) family.

It localises to the cell membrane. This is an uncharacterized protein from Bordetella parapertussis (strain 12822 / ATCC BAA-587 / NCTC 13253).